The primary structure comprises 187 residues: UPF0301 protein VSAL_I0547 (187 aa).

The protein belongs to the UPF0301 (AlgH) family.

The chain is UPF0301 protein VSAL_I0547 from Aliivibrio salmonicida (strain LFI1238) (Vibrio salmonicida (strain LFI1238)).